Reading from the N-terminus, the 261-residue chain is Class II histocompatibility antigen, M beta 1 chain (261 aa).

Residues 1–18 (MAALWLLLLVLSLHCMGA) form the signal peptide. Residues 19–112 (GGFVAHVEST…PFWNALTHRT (94 aa)) form a beta-1 region. Residues 19 to 218 (GGFVAHVEST…PGLSPIQTVK (200 aa)) are Lumenal-facing. Cystine bridges form between C29–C97, C43–C53, and C135–C192. An N-linked (GlcNAc...) asparagine glycan is attached at N75. Residues 113–207 (RPPSVRVAQT…GTSEPIRGDW (95 aa)) are beta-2. In terms of domain architecture, Ig-like C1-type spans 114–204 (PPSVRVAQTT…QHSGTSEPIR (91 aa)). The tract at residues 208–218 (TPGLSPIQTVK) is connecting peptide. The helical transmembrane segment at 219–239 (VSVSAATLGLGFIIFCVGFFR) threads the bilayer. Topologically, residues 240–261 (WRKSHSSSYTPLSGSTYPEGRH) are cytoplasmic. Positions 248–251 (YTPL) match the YXXZ motif motif.

It belongs to the MHC class II family. As to quaternary structure, heterodimer of an alpha chain (DMA) and a beta chain (DMB). Interacts with MHCII; this interaction mediates rapid selection of high-affinity peptides.

Its subcellular location is the late endosome membrane. It localises to the lysosome membrane. Plays a critical role in catalyzing the release of class II-associated invariant chain peptide (CLIP) from newly synthesized MHC class II molecules and freeing the peptide binding site for acquisition of antigenic peptides. This is Class II histocompatibility antigen, M beta 1 chain (H2-DMb1) from Mus musculus (Mouse).